We begin with the raw amino-acid sequence, 95 residues long: Small ribosomal subunit protein bS6 (95 aa).

It belongs to the bacterial ribosomal protein bS6 family.

Binds together with bS18 to 16S ribosomal RNA. The protein is Small ribosomal subunit protein bS6 of Corynebacterium diphtheriae (strain ATCC 700971 / NCTC 13129 / Biotype gravis).